The sequence spans 72 residues: IRCFITPDVTSQACPDGQNICYTKTWCDNFCGMRGKRVDLGCAATCPTVKPGVDIKCCSTDNCNPFPTRERS.

5 disulfides stabilise this stretch: Cys3–Cys21, Cys14–Cys42, Cys27–Cys31, Cys46–Cys57, and Cys58–Cys63.

Belongs to the three-finger toxin family. Long-chain subfamily. Type II alpha-neurotoxin sub-subfamily. In terms of tissue distribution, expressed by the venom gland.

Its subcellular location is the secreted. Its function is as follows. Binds with high affinity to muscular (alpha-1/CHRNA1) and neuronal (alpha-7/CHRNA7) nicotinic acetylcholine receptor (nAChR) and inhibits acetylcholine from binding to the receptor, thereby impairing neuromuscular and neuronal transmission. The protein is Long neurotoxin 1 of Naja anchietae (Anchieta's cobra).